A 253-amino-acid polypeptide reads, in one-letter code: Prolactin-7A2 (253 aa).

Positions Met-1–Ser-30 are cleaved as a signal peptide. N-linked (GlcNAc...) asparagine glycans are attached at residues Asn-36, Asn-103, and Asn-135. Disulfide bonds link Cys-101–Cys-218 and Cys-235–Cys-244.

Belongs to the somatotropin/prolactin family. As to expression, expression restricted to the placental tissue. Expressed only in the spongiotrophoblasts.

The protein resides in the secreted. The sequence is that of Prolactin-7A2 (Prl7a2) from Mus musculus (Mouse).